The sequence spans 625 residues: Chaperone protein HtpG (625 aa).

The tract at residues 1–332 is a; substrate-binding; that stretch reads MSKKTNAPVQ…TEDLSLNVSR (332 aa). The segment at 333-545 is b; it reads EVVQSSPVMA…KDAMDSQMER (213 aa). The interval 546 to 625 is c; sequence MMKMMQQEMP…ELIEAATLSR (80 aa).

This sequence belongs to the heat shock protein 90 family. Homodimer.

Its subcellular location is the cytoplasm. Molecular chaperone. Has ATPase activity. The sequence is that of Chaperone protein HtpG from Chlorobium phaeovibrioides (strain DSM 265 / 1930) (Prosthecochloris vibrioformis (strain DSM 265)).